A 337-amino-acid chain; its full sequence is MSGSPVKRQRMESALDQLKQFTTVVADTGDFNAIDEYKPQDATTNPSLILAAAQMPAYQELVEEAIAYGKKLGGPQEEQIKNAIDKLFVLFGAEILKKIPGRVSTEVDARLSFDKDAMVARARRIIELYKEAGISKDRILIKLSSTWEGIQAGKELEEQHGIHCNMTLLFSFAQAVACAEAGVTLISPFVGRILDWHVANTDKKSYEPQEDPGVKSVTKIYNYYKKFGYKTIVMGASFRNTGEIKALAGCDFLTISPKLLGELLKDSSKLAPTLSVKAAQTSDLEKIHLDEKAFRWLHNEDQMAVEKLSDGIRKFAADAIKLERMLTERMFSAENGK.

Residues 1-10 (MSGSPVKRQR) carry the Nuclear localization signal motif. The residue at position 115 (Lys-115) is an N6-acetyllysine. Lys-142 (schiff-base intermediate with substrate) is an active-site residue. Lys-219 carries the N6-acetyllysine modification. Ser-237 and Ser-256 each carry phosphoserine. N6-acetyllysine is present on residues Lys-269, Lys-286, and Lys-321.

Belongs to the transaldolase family. Type 1 subfamily. Homodimer. Interacts with KPNA1 and KPNA4.

It localises to the nucleus. Its subcellular location is the cytoplasm. It catalyses the reaction D-sedoheptulose 7-phosphate + D-glyceraldehyde 3-phosphate = D-erythrose 4-phosphate + beta-D-fructose 6-phosphate. It participates in carbohydrate degradation; pentose phosphate pathway; D-glyceraldehyde 3-phosphate and beta-D-fructose 6-phosphate from D-ribose 5-phosphate and D-xylulose 5-phosphate (non-oxidative stage): step 2/3. Its function is as follows. Catalyzes the rate-limiting step of the non-oxidative phase in the pentose phosphate pathway. Catalyzes the reversible conversion of sedheptulose-7-phosphate and D-glyceraldehyde 3-phosphate into erythrose-4-phosphate and beta-D-fructose 6-phosphate. The protein is Transaldolase (Taldo1) of Rattus norvegicus (Rat).